Reading from the N-terminus, the 796-residue chain is Polyribonucleotide nucleotidyltransferase (796 aa).

Residues Asp-490 and Asp-496 each coordinate Mg(2+). The KH domain maps to Pro-557–Ile-616. The region spanning Gly-626 to Arg-693 is the S1 motif domain. Low complexity-rich tracts occupy residues Asp-717–Phe-728, Gly-747–Gly-759, and Ser-769–Arg-784. The segment at Asp-717–Phe-796 is disordered. Residues Asn-785–Phe-796 are compositionally biased toward basic and acidic residues.

Belongs to the polyribonucleotide nucleotidyltransferase family. Requires Mg(2+) as cofactor.

It is found in the cytoplasm. The enzyme catalyses RNA(n+1) + phosphate = RNA(n) + a ribonucleoside 5'-diphosphate. Involved in mRNA degradation. Catalyzes the phosphorolysis of single-stranded polyribonucleotides processively in the 3'- to 5'-direction. The protein is Polyribonucleotide nucleotidyltransferase of Ehrlichia chaffeensis (strain ATCC CRL-10679 / Arkansas).